A 274-amino-acid polypeptide reads, in one-letter code: Putative 2-succinyl-6-hydroxy-2,4-cyclohexadiene-1-carboxylate synthase (274 aa).

Residues 26-259 (AVVCLHGFTG…KAGHTVHVEQ (234 aa)) enclose the AB hydrolase-1 domain.

It belongs to the AB hydrolase superfamily. MenH family. In terms of assembly, monomer.

The catalysed reaction is 5-enolpyruvoyl-6-hydroxy-2-succinyl-cyclohex-3-ene-1-carboxylate = (1R,6R)-6-hydroxy-2-succinyl-cyclohexa-2,4-diene-1-carboxylate + pyruvate. The protein operates within quinol/quinone metabolism; 1,4-dihydroxy-2-naphthoate biosynthesis; 1,4-dihydroxy-2-naphthoate from chorismate: step 3/7. It participates in quinol/quinone metabolism; menaquinone biosynthesis. Catalyzes a proton abstraction reaction that results in 2,5-elimination of pyruvate from 2-succinyl-5-enolpyruvyl-6-hydroxy-3-cyclohexene-1-carboxylate (SEPHCHC) and the formation of 2-succinyl-6-hydroxy-2,4-cyclohexadiene-1-carboxylate (SHCHC). The sequence is that of Putative 2-succinyl-6-hydroxy-2,4-cyclohexadiene-1-carboxylate synthase from Bacillus subtilis (strain 168).